A 493-amino-acid chain; its full sequence is MAANFQLPLQCLQYLEKRGAESQRFLIASSGGKIYSYAAETGQRLSSWPQDVDASNANNSKATETETGSEDQAPPEKKRKVSPSEEGPAETSKSTVKASTWSSIPCLVAHSNGDYVIALTAEDKCVRVLRLKDDGTLEQLSERCMPKRPCSIALTDDGNTILCGDKFGDVYSLPLLPGNEPYVAPKLPNRPKVPSATPLTVHSKRNLESLEQQLRYSQKNSTEEKNSLNFQHQLLLGHVSLLTDVAFVTVPQDDNFGKKRSYILTGDRDEHIRVSRYPQAHIIEGYCLGHTAFVTKLCIPQYAPGYLISGGGDDYLLVWKWSEGRILQKVPLVKQESETTQVTVRGIWATSIGGSNIVLVALEGSSNLQCFVLGSDGTLKPQDPIEMSGNVLDVAIMEKDSTIVVSVDCIREKGSTHEWRASPTSPSNLIESFRVKPGTENLEWEPVTESLVTNINMGGSSGIPADADTKQRKELNDVLYSLGNLRKKHGEDD.

The segment covering 46–66 (SSWPQDVDASNANNSKATETE) has biased composition (polar residues). Positions 46–96 (SSWPQDVDASNANNSKATETETGSEDQAPPEKKRKVSPSEEGPAETSKSTV) are disordered. WD repeat units lie at residues 99–139 (STWS…TLEQ), 237–287 (GHVS…EGYC), and 289–331 (GHTA…QKVP).

Belongs to the WD repeat TRM82 family. Forms a heterodimer with the catalytic subunit trm8.

Its subcellular location is the nucleus. It functions in the pathway tRNA modification; N(7)-methylguanine-tRNA biosynthesis. Its function is as follows. Required for the formation of N(7)-methylguanine at position 46 (m7G46) in tRNA. In the complex, it is required to stabilize and induce conformational changes of the catalytic subunit. The sequence is that of tRNA (guanine-N(7)-)-methyltransferase non-catalytic subunit trm82 (trm82) from Aspergillus oryzae (strain ATCC 42149 / RIB 40) (Yellow koji mold).